The chain runs to 1196 residues: MAGHDIKYGKHRTRRSFSRIKEVIGLPNLIEVQTLSYKNFLDEGLANVFKEMFPIDNFAGTMELEFVGYEMKTPKYTVEEARAHDANYSAPIYVTFRLVNKETGELKTQEVFFGDFPLMTEMGTFINNGSERLIVSQLVRSPGSYFHLKTDKNGLESFGHTTIPNRGAWFELDTDAKGIGYVRIDRTRKLTFTTMLRALGFGSDDEILELLGETQLLTDTIAKDVHKNPADTRVEEALKDIYDRLRPGEPKTADSSRGLLVARFFDPKRYDFAPVGRYKFNKKLALKNRLLGLTLAEPIVDPETGEILVNTDTLVTRDVLDLIEPLLDNGLGNFVVEPSDDAVIPEPITLQSIKVYSPKDSERVVTLLSNGNPDSECRVLTPADVISNISYWLGLAEGIGKVDDIDHLGNRRIRSVGELLQNQVRIGLSRMERVIRERMSSSENENITPQGLINIRPVTASIKEFFGSSQLSQFMDQHNPLSELSHKRRFSALGPGGISRDRASYEVRDVHYTHYGRMCPIETPEGPNIGLINNLSSYAKVNEYGFIMSPYRRVDRVNGIVTDEVEYLTADEEDNYTVAQANSPLTDDSRFANETVMARHTGNNIEVEASTADYMDVSPKQVIAVAAACIPFLENDDSNRALMGANMQRQAVPLIDPHAPWIGTGMEHQTARDSGAALLAKHAGVVEYVDGNEIRVRRTSGELDIYNITKYRRSNSGTSYNQRPLARLGEKVEKNDIIADGPSMENGEMALGQNPLVAYMTWEGYNFEDAVIMSERLIKDDVYTSIAIEEYESETRDTKLGPEEITREIPNVGDEALKNLDESGIIRIGAEVKDGDLLVGKVTPKGETDPTPEERLLRAIFGEKAREVRDTSLRVPHGGGGIVHDVRVFTRENGDELPSGVNKLVRVFIAQKRKIHVGDKMAGRHGNKGVVSNIVPVEDMPYLPDGTPIDIMLNPLGVPSRMNIGQVMELHLGMAARTLGIHIATPVFDGASDEDIWDTVKEAGMAADAKTVLYDGRTGEPFDNRISVGVMYMIKLHHMVDDKLHARSVGPYSLVTQQPLGGKAQFGGQRFGEMEVWALEAYGAANVLQEILTYKSDDVIGRTRAYEAIVKGERIPKPGLPESFRVLVKELQSLGLDMKVFDADRNVLDLRELDEDEVMTRPDNTEITPEMLEAQEAIVAQAEAEEEALINADIEK.

The protein belongs to the RNA polymerase beta chain family. As to quaternary structure, the RNAP catalytic core consists of 2 alpha, 1 beta, 1 beta' and 1 omega subunit. When a sigma factor is associated with the core the holoenzyme is formed, which can initiate transcription.

The enzyme catalyses RNA(n) + a ribonucleoside 5'-triphosphate = RNA(n+1) + diphosphate. DNA-dependent RNA polymerase catalyzes the transcription of DNA into RNA using the four ribonucleoside triphosphates as substrates. In Lactococcus lactis subsp. cremoris (strain SK11), this protein is DNA-directed RNA polymerase subunit beta.